Here is a 365-residue protein sequence, read N- to C-terminus: Class I histocompatibility antigen, Gogo-A*0401 alpha chain (365 aa).

The N-terminal stretch at 1–24 (MAVMAPRTLVLLLSGALALTQTWA) is a signal peptide. The alpha-1 stretch occupies residues 25-114 (GSHSMRYFYT…LRGYYNQSED (90 aa)). At 25-308 (GSHSMRYFYT…EPSSQPTIPI (284 aa)) the chain is on the extracellular side. Residue Asn110 is glycosylated (N-linked (GlcNAc...) asparagine). The tract at residues 115 to 206 (GSHTIQRMYG…ENGKETLQLT (92 aa)) is alpha-2. 2 disulfides stabilise this stretch: Cys125/Cys188 and Cys227/Cys283. Residues 207-298 (DAPKTHMTHH…GLPKPLTLRW (92 aa)) form an alpha-3 region. Residues 209-295 (PKTHMTHHPV…QHEGLPKPLT (87 aa)) enclose the Ig-like C1-type domain. Positions 299 to 308 (EPSSQPTIPI) are connecting peptide. A helical transmembrane segment spans residues 309-332 (VGIIAGLVLFGAVIAGAVVAAVRW). The Cytoplasmic portion of the chain corresponds to 333-365 (RRKSSDRKGGSYSQAASSDSAQGSDVSLTACKV). The tract at residues 338–365 (DRKGGSYSQAASSDSAQGSDVSLTACKV) is disordered. Residues 342–359 (GSYSQAASSDSAQGSDVS) are compositionally biased toward low complexity. Ser343 is modified (phosphoserine). Tyr344 is subject to Phosphotyrosine. A phosphoserine mark is found at Ser345, Ser349, Ser350, Ser352, Ser356, and Ser359.

Belongs to the MHC class I family. Heterodimer of an alpha chain and a beta chain (beta-2-microglobulin).

The protein localises to the membrane. In terms of biological role, involved in the presentation of foreign antigens to the immune system. This is Class I histocompatibility antigen, Gogo-A*0401 alpha chain from Gorilla gorilla gorilla (Western lowland gorilla).